Here is a 436-residue protein sequence, read N- to C-terminus: ATP-dependent RNA helicase RhlB (436 aa).

Positions 9-37 (QKFADFPLHKEVHQALNEAGFEFCTPIQA) match the Q motif motif. Positions 40-219 (LPILLEKKDI…YDHMNEPEKV (180 aa)) constitute a Helicase ATP-binding domain. Position 53–60 (53–60 (AQTGTGKT)) interacts with ATP. The DEAD box motif lies at 165–168 (DEAD). Residues 243-390 (KMPLLLSLLE…VTSYDSDALL (148 aa)) form the Helicase C-terminal domain. Residues 392–436 (DIPPPVRIHRKPSTHTRNTRDRGASRPQGGQRSGPRRHDRTRRHS) are disordered. Over residues 425–436 (GPRRHDRTRRHS) the composition is skewed to basic residues.

It belongs to the DEAD box helicase family. RhlB subfamily. In terms of assembly, component of the RNA degradosome, which is a multiprotein complex involved in RNA processing and mRNA degradation.

It is found in the cytoplasm. The enzyme catalyses ATP + H2O = ADP + phosphate + H(+). Functionally, DEAD-box RNA helicase involved in RNA degradation. Has RNA-dependent ATPase activity and unwinds double-stranded RNA. The chain is ATP-dependent RNA helicase RhlB from Shewanella halifaxensis (strain HAW-EB4).